The sequence spans 502 residues: ATP synthase subunit beta (502 aa).

153–160 (GGAGVGKT) lines the ATP pocket.

It belongs to the ATPase alpha/beta chains family. F-type ATPases have 2 components, CF(1) - the catalytic core - and CF(0) - the membrane proton channel. CF(1) has five subunits: alpha(3), beta(3), gamma(1), delta(1), epsilon(1). CF(0) has three main subunits: a(1), b(2) and c(9-12). The alpha and beta chains form an alternating ring which encloses part of the gamma chain. CF(1) is attached to CF(0) by a central stalk formed by the gamma and epsilon chains, while a peripheral stalk is formed by the delta and b chains.

It is found in the cell membrane. It catalyses the reaction ATP + H2O + 4 H(+)(in) = ADP + phosphate + 5 H(+)(out). Produces ATP from ADP in the presence of a proton gradient across the membrane. The catalytic sites are hosted primarily by the beta subunits. The chain is ATP synthase subunit beta from Amoebophilus asiaticus (strain 5a2).